The sequence spans 251 residues: Probable ATP-dependent transporter ycf16 (251 aa).

Residues 7–251 (LNIKNLDVTI…EKYGYDYLNK (245 aa)) form the ABC transporter domain. 39 to 46 (GKNGSGKS) lines the ATP pocket.

This sequence belongs to the ABC transporter superfamily. Ycf16 family.

Its subcellular location is the plastid. The protein localises to the chloroplast. This chain is Probable ATP-dependent transporter ycf16 (ycf16), found in Antithamnion sp. (Red alga).